A 339-amino-acid chain; its full sequence is Probable G-protein coupled receptor 33 (339 aa).

At M1–A30 the chain is on the extracellular side. N-linked (GlcNAc...) asparagine glycosylation is found at N5 and N19. Residues I31 to M53 traverse the membrane as a helical segment. Over L54–T64 the chain is Cytoplasmic. A helical membrane pass occupies residues L65–T86. The Extracellular portion of the chain corresponds to S87–V103. A disulfide bridge connects residues C101 and C179. A helical membrane pass occupies residues F104–V124. The Cytoplasmic segment spans residues D125 to R143. The helical transmembrane segment at W144–V165 threads the bilayer. Residues F166–R209 lie on the Extracellular side of the membrane. A helical transmembrane segment spans residues F210–T230. The Cytoplasmic portion of the chain corresponds to K231–V246. The helical transmembrane segment at M247–V268 threads the bilayer. Topologically, residues L269–L283 are extracellular. Residues A284–G303 traverse the membrane as a helical segment. The Cytoplasmic segment spans residues E304 to I339.

This sequence belongs to the G-protein coupled receptor 1 family.

The protein localises to the cell membrane. Orphan receptor; could be a chemoattractant receptor. This Rattus rattus (Black rat) protein is Probable G-protein coupled receptor 33 (Gpr33).